Consider the following 363-residue polypeptide: SWIRM domain-containing protein YOR338W (363 aa).

2 disordered regions span residues 1-22 (MLDN…GGIN) and 186-208 (LYED…VPVR). A compositionally biased stretch (basic and acidic residues) spans 186 to 196 (LYEDDGNRSEN). One can recognise an SWIRM domain in the interval 266–363 (LKVEWKGSPM…LQDKHFEKYL (98 aa)).

In Saccharomyces cerevisiae (strain ATCC 204508 / S288c) (Baker's yeast), this protein is SWIRM domain-containing protein YOR338W.